Here is a 303-residue protein sequence, read N- to C-terminus: Glycine--tRNA ligase alpha subunit (303 aa).

This sequence belongs to the class-II aminoacyl-tRNA synthetase family. Tetramer of two alpha and two beta subunits.

Its subcellular location is the cytoplasm. The catalysed reaction is tRNA(Gly) + glycine + ATP = glycyl-tRNA(Gly) + AMP + diphosphate. The polypeptide is Glycine--tRNA ligase alpha subunit (Streptococcus equi subsp. equi (strain 4047)).